The chain runs to 70 residues: Melittin (70 aa).

The signal sequence occupies residues 1–21 (MKFLVNVALVFMVVYISFIYA). Positions 22 to 43 (APEPEPAPEAEAEADAEADPEA) are cleaved as a propeptide — removed by a dipeptidylpeptidase. The residue at position 44 (glycine 44) is an N-formylglycine; partial. Glutamine amide is present on glutamine 69.

It belongs to the melittin family. As to quaternary structure, monomer (in solution and for integration into membranes), homotetramer (in solution and potentially as a toroidal pore in membranes), and potenially homomultimer (as a toroidal pore in membranes). As to expression, expressed by the venom gland.

The protein localises to the secreted. Its subcellular location is the target cell membrane. In terms of biological role, main toxin of bee venom with strong hemolytic activity and antimicrobial activity. It has enhancing effects on bee venom phospholipase A2 activity. This amphipathic toxin binds to negatively charged membrane surface and forms pore by inserting into lipid bilayers inducing the leakage of ions and molecules and the enhancement of permeability that ultimately leads to cell lysis. It acts as a voltage-gated pore with higher selectivity for anions over cations. The ion conductance has been shown to be voltage-dependent. Self-association of melittin in membranes is promoted by high ionic strength, but not by the presence of negatively charged lipids. In vivo, intradermal injection into healthy human volunteers produce sharp pain sensation and an inflammatory response. It produces pain by activating primary nociceptor cells directly and indirectly due to its ability to activate plasma membrane phospholipase A2 and its pore-forming activity. The protein is Melittin (MELT) of Polistes hebraeus (Paper wasp).